Reading from the N-terminus, the 132-residue chain is Translation initiation factor 5A (132 aa).

K36 carries the post-translational modification Hypusine.

It belongs to the eIF-5A family.

It is found in the cytoplasm. Functionally, functions by promoting the formation of the first peptide bond. The protein is Translation initiation factor 5A of Methanosphaera stadtmanae (strain ATCC 43021 / DSM 3091 / JCM 11832 / MCB-3).